The chain runs to 1414 residues: DNA-directed RNA polymerase subunit beta' (1414 aa).

Zn(2+) is bound by residues Cys-70, Cys-72, Cys-85, and Cys-88. Residues Asp-460, Asp-462, and Asp-464 each contribute to the Mg(2+) site. Residues Cys-819, Cys-893, Cys-900, and Cys-903 each contribute to the Zn(2+) site. The segment at 1391 to 1414 (AEEAFDFGTPSAPAEEPQQHPAAE) is disordered. The segment covering 1400–1414 (PSAPAEEPQQHPAAE) has biased composition (low complexity).

It belongs to the RNA polymerase beta' chain family. As to quaternary structure, the RNAP catalytic core consists of 2 alpha, 1 beta, 1 beta' and 1 omega subunit. When a sigma factor is associated with the core the holoenzyme is formed, which can initiate transcription. Mg(2+) is required as a cofactor. The cofactor is Zn(2+).

The enzyme catalyses RNA(n) + a ribonucleoside 5'-triphosphate = RNA(n+1) + diphosphate. DNA-dependent RNA polymerase catalyzes the transcription of DNA into RNA using the four ribonucleoside triphosphates as substrates. The polypeptide is DNA-directed RNA polymerase subunit beta' (Burkholderia lata (strain ATCC 17760 / DSM 23089 / LMG 22485 / NCIMB 9086 / R18194 / 383)).